Reading from the N-terminus, the 177-residue chain is Adenine phosphoribosyltransferase (177 aa).

This sequence belongs to the purine/pyrimidine phosphoribosyltransferase family. As to quaternary structure, homodimer.

The protein localises to the cytoplasm. It catalyses the reaction AMP + diphosphate = 5-phospho-alpha-D-ribose 1-diphosphate + adenine. The protein operates within purine metabolism; AMP biosynthesis via salvage pathway; AMP from adenine: step 1/1. Functionally, catalyzes a salvage reaction resulting in the formation of AMP, that is energically less costly than de novo synthesis. The chain is Adenine phosphoribosyltransferase from Prosthecochloris aestuarii (strain DSM 271 / SK 413).